Consider the following 259-residue polypeptide: Probable kinetochore protein spc25 (259 aa).

Over residues 1–20 the composition is skewed to polar residues; it reads MSRKSVMSSTFEPSLSTSRQ. The interval 1 to 25 is disordered; sequence MSRKSVMSSTFEPSLSTSRQPLGPS. Residues 59–162 adopt a coiled-coil conformation; sequence RKRVLEERNQ…HAAQLEAQAR (104 aa).

It belongs to the SPC25 family. Component of the NDC80 complex, which consists of kpr-1/ndc80, kpr-2/nuf2, kpr-3/spc24 and kpr-4/spc25.

The protein resides in the nucleus. Its subcellular location is the chromosome. The protein localises to the centromere. It is found in the kinetochore. In terms of biological role, acts as a component of the essential kinetochore-associated NDC80 complex, which is required for chromosome segregation and spindle checkpoint activity. In Neurospora crassa (strain ATCC 24698 / 74-OR23-1A / CBS 708.71 / DSM 1257 / FGSC 987), this protein is Probable kinetochore protein spc25 (kpr-4).